Reading from the N-terminus, the 508-residue chain is Bifunctional purine biosynthesis protein PurH (508 aa).

In terms of domain architecture, MGS-like spans 1 to 145; it reads MAKKALISVS…KNYKYVTILV (145 aa).

Belongs to the PurH family.

It carries out the reaction (6R)-10-formyltetrahydrofolate + 5-amino-1-(5-phospho-beta-D-ribosyl)imidazole-4-carboxamide = 5-formamido-1-(5-phospho-D-ribosyl)imidazole-4-carboxamide + (6S)-5,6,7,8-tetrahydrofolate. The enzyme catalyses IMP + H2O = 5-formamido-1-(5-phospho-D-ribosyl)imidazole-4-carboxamide. Its pathway is purine metabolism; IMP biosynthesis via de novo pathway; 5-formamido-1-(5-phospho-D-ribosyl)imidazole-4-carboxamide from 5-amino-1-(5-phospho-D-ribosyl)imidazole-4-carboxamide (10-formyl THF route): step 1/1. It functions in the pathway purine metabolism; IMP biosynthesis via de novo pathway; IMP from 5-formamido-1-(5-phospho-D-ribosyl)imidazole-4-carboxamide: step 1/1. The protein is Bifunctional purine biosynthesis protein PurH of Thermoanaerobacter sp. (strain X514).